The primary structure comprises 288 residues: Phosphatidylserine decarboxylase proenzyme (288 aa).

Residues Asp90, His147, and Ser252 each act as charge relay system; for autoendoproteolytic cleavage activity in the active site. The active-site Schiff-base intermediate with substrate; via pyruvic acid; for decarboxylase activity is the Ser252. Ser252 is subject to Pyruvic acid (Ser); by autocatalysis.

Belongs to the phosphatidylserine decarboxylase family. PSD-B subfamily. Prokaryotic type I sub-subfamily. In terms of assembly, heterodimer of a large membrane-associated beta subunit and a small pyruvoyl-containing alpha subunit. Pyruvate is required as a cofactor. In terms of processing, is synthesized initially as an inactive proenzyme. Formation of the active enzyme involves a self-maturation process in which the active site pyruvoyl group is generated from an internal serine residue via an autocatalytic post-translational modification. Two non-identical subunits are generated from the proenzyme in this reaction, and the pyruvate is formed at the N-terminus of the alpha chain, which is derived from the carboxyl end of the proenzyme. The autoendoproteolytic cleavage occurs by a canonical serine protease mechanism, in which the side chain hydroxyl group of the serine supplies its oxygen atom to form the C-terminus of the beta chain, while the remainder of the serine residue undergoes an oxidative deamination to produce ammonia and the pyruvoyl prosthetic group on the alpha chain. During this reaction, the Ser that is part of the protease active site of the proenzyme becomes the pyruvoyl prosthetic group, which constitutes an essential element of the active site of the mature decarboxylase.

Its subcellular location is the cell membrane. The enzyme catalyses a 1,2-diacyl-sn-glycero-3-phospho-L-serine + H(+) = a 1,2-diacyl-sn-glycero-3-phosphoethanolamine + CO2. The protein operates within phospholipid metabolism; phosphatidylethanolamine biosynthesis; phosphatidylethanolamine from CDP-diacylglycerol: step 2/2. Catalyzes the formation of phosphatidylethanolamine (PtdEtn) from phosphatidylserine (PtdSer). The protein is Phosphatidylserine decarboxylase proenzyme of Pseudomonas fluorescens (strain ATCC BAA-477 / NRRL B-23932 / Pf-5).